The sequence spans 523 residues: Sensory neuron membrane protein 1 (523 aa).

Residues 1–11 (MQLPRELKYAA) are Cytoplasmic-facing. A helical transmembrane segment spans residues 12–32 (IAGGVALFGLIFGWVLFPTIL). At 33 to 458 (KSQLKKEMAL…HQLFIPKRVV (426 aa)) the chain is on the extracellular side. N229 carries N-linked (GlcNAc...) asparagine glycosylation. 3 disulfides stabilise this stretch: C268-C333, C297-C352, and C335-C341. N440 carries N-linked (GlcNAc...) asparagine glycosylation. A helical transmembrane segment spans residues 459–479 (GVLRWWMVSFGSLGAVIGIVF). The Cytoplasmic segment spans residues 480 to 523 (HFRDHIMRLAVSGDTKVSKVIPEVEEQKDISVIGQAQEPAKVNI).

This sequence belongs to the CD36 family.

The protein localises to the cell membrane. In terms of biological role, plays an olfactory role that is not restricted to pheromone sensitivity. The polypeptide is Sensory neuron membrane protein 1 (Helicoverpa assulta (Oriental tobacco budworm)).